Reading from the N-terminus, the 120-residue chain is NADH-ubiquinone oxidoreductase chain 3 (120 aa).

The next 3 membrane-spanning stretches (helical) occupy residues 10–30, 62–82, and 89–109; these read ILILFFISLGLSIILFFLGYF, FYLVAILFLIFDLEITFLFPF, and MTLFSYSIMLIFLIILTIGFI.

It belongs to the complex I subunit 3 family.

The protein resides in the mitochondrion membrane. The enzyme catalyses a ubiquinone + NADH + 5 H(+)(in) = a ubiquinol + NAD(+) + 4 H(+)(out). Its function is as follows. Core subunit of the mitochondrial membrane respiratory chain NADH dehydrogenase (Complex I) that is believed to belong to the minimal assembly required for catalysis. Complex I functions in the transfer of electrons from NADH to the respiratory chain. The immediate electron acceptor for the enzyme is believed to be ubiquinone. The chain is NADH-ubiquinone oxidoreductase chain 3 (nad3) from Dictyostelium citrinum (Slime mold).